A 357-amino-acid polypeptide reads, in one-letter code: Chorismate synthase (357 aa).

An NADP(+)-binding site is contributed by Arg-47. FMN is bound by residues 123 to 125 (RSS), Gly-281, 296 to 300 (KPTSS), and Arg-324.

Belongs to the chorismate synthase family. In terms of assembly, homotetramer. It depends on FMNH2 as a cofactor.

It catalyses the reaction 5-O-(1-carboxyvinyl)-3-phosphoshikimate = chorismate + phosphate. The protein operates within metabolic intermediate biosynthesis; chorismate biosynthesis; chorismate from D-erythrose 4-phosphate and phosphoenolpyruvate: step 7/7. In terms of biological role, catalyzes the anti-1,4-elimination of the C-3 phosphate and the C-6 proR hydrogen from 5-enolpyruvylshikimate-3-phosphate (EPSP) to yield chorismate, which is the branch point compound that serves as the starting substrate for the three terminal pathways of aromatic amino acid biosynthesis. This reaction introduces a second double bond into the aromatic ring system. In Chlamydia muridarum (strain MoPn / Nigg), this protein is Chorismate synthase.